We begin with the raw amino-acid sequence, 508 residues long: Photosystem II CP47 reaction center protein (508 aa).

6 consecutive transmembrane segments (helical) span residues 21–36, 101–115, 140–156, 203–218, 237–252, and 457–472; these read SVHI…WAGS, IVFS…IWHW, GIHL…FGAF, IAAG…FHLS, VLSS…AFVV, and SFAL…HGAR.

It belongs to the PsbB/PsbC family. PsbB subfamily. As to quaternary structure, PSII is composed of 1 copy each of membrane proteins PsbA, PsbB, PsbC, PsbD, PsbE, PsbF, PsbH, PsbI, PsbJ, PsbK, PsbL, PsbM, PsbT, PsbX, PsbY, PsbZ, Psb30/Ycf12, at least 3 peripheral proteins of the oxygen-evolving complex and a large number of cofactors. It forms dimeric complexes. Requires Binds multiple chlorophylls. PSII binds additional chlorophylls, carotenoids and specific lipids. as cofactor.

It localises to the plastid. It is found in the chloroplast thylakoid membrane. In terms of biological role, one of the components of the core complex of photosystem II (PSII). It binds chlorophyll and helps catalyze the primary light-induced photochemical processes of PSII. PSII is a light-driven water:plastoquinone oxidoreductase, using light energy to abstract electrons from H(2)O, generating O(2) and a proton gradient subsequently used for ATP formation. The chain is Photosystem II CP47 reaction center protein from Ipomoea purpurea (Common morning glory).